A 130-amino-acid chain; its full sequence is Acidic phospholipase A2 daboiatoxin B chain (130 aa).

Positions 1-8 (MCLIGVEG) are cleaved as a signal peptide. Intrachain disulfides connect cysteine 34–cysteine 123, cysteine 36–cysteine 52, cysteine 51–cysteine 103, cysteine 57–cysteine 130, cysteine 58–cysteine 96, cysteine 65–cysteine 89, and cysteine 83–cysteine 94. Ca(2+) contacts are provided by tyrosine 35, glycine 37, and glycine 39. The active site involves histidine 55. Aspartate 56 is a Ca(2+) binding site. Aspartate 97 is a catalytic residue.

The protein belongs to the phospholipase A2 family. Group II subfamily. D49 sub-subfamily. Heterodimer of an acidic protein having phospholipase A2 activity (B chain) and an A chain which weakly inhibits the B chain enzymatic activity but potentiates its lethal potency. Ca(2+) serves as cofactor. As to expression, expressed by the venom gland.

It localises to the secreted. It catalyses the reaction a 1,2-diacyl-sn-glycero-3-phosphocholine + H2O = a 1-acyl-sn-glycero-3-phosphocholine + a fatty acid + H(+). Monomer: Snake venom phospholipase A2 (PLA2) that shows a high PLA2 activity (2110 umol/min/mg). Its function is as follows. Heterodimer (A and B chains): snake venom phospholipase A2 that shows a moderate PLA2 activity (1377 umol/min/mg). Acts as a presynaptic neurotoxin. In vivo, induces edema and produces neurotoxic symptoms in mice. It exhibits indirect hemolysis and a strong myonecrotic activity and is cytotoxic. PLA2 catalyzes the calcium-dependent hydrolysis of the 2-acyl groups in 3-sn-phosphoglycerides. This Daboia siamensis (Eastern Russel's viper) protein is Acidic phospholipase A2 daboiatoxin B chain.